The primary structure comprises 469 residues: Cysteine protease ATG4 (469 aa).

The tract at residues 48-99 is disordered; sequence KNIKADDHHPQTPPSVLKAETETQEAHDTAQPPNPPTNAPDTPPDSISSSFS. A compositionally biased stretch (basic and acidic residues) spans 66–75; that stretch reads AETETQEAHD. A compositionally biased stretch (pro residues) spans 79–90; it reads PPNPPTNAPDTP. Cys172 functions as the Nucleophile in the catalytic mechanism. Residues Asp362 and His364 contribute to the active site. A disordered region spans residues 443–469; sequence GSSEGRESAIDEVETLSDDDTDTIHEA. Residues 452–463 are compositionally biased toward acidic residues; sequence IDEVETLSDDDT.

The protein belongs to the peptidase C54 family. In terms of assembly, interacts with ATG8.

It is found in the cytoplasm. It localises to the nucleus. The protein localises to the preautophagosomal structure. The enzyme catalyses [protein]-C-terminal L-amino acid-glycyl-phosphatidylethanolamide + H2O = [protein]-C-terminal L-amino acid-glycine + a 1,2-diacyl-sn-glycero-3-phosphoethanolamine. Its function is as follows. Cysteine protease that plays a key role in cytoplasm to vacuole transport (Cvt) and autophagy by mediating both proteolytic activation and delipidation of ATG8. Required for selective autophagic degradation of the nucleus (nucleophagy) as well as for mitophagy which contributes to regulate mitochondrial quantity and quality by eliminating the mitochondria to a basal level to fulfill cellular energy requirements and preventing excess ROS production. The protease activity is required for proteolytic activation of ATG8: cleaves the C-terminal amino acid of ATG8 to reveal a C-terminal glycine. ATG8 ubiquitin-like activity requires the exposure of the glycine at the C-terminus for its conjugation to phosphatidylethanolamine (PE) and its insertion to membranes, which is necessary for autophagy. The ATG8-PE conjugate mediates tethering between adjacent membranes and stimulates membrane hemifusion, leading to expansion of the autophagosomal membrane during autophagy. In addition to the protease activity, also catalyzes deconjugation of PE-conjugated forms of ATG8 during macroautophagy: ATG8 delipidation is required to release the protein from membranes, which facilitates multiple events during macroautophagy, and especially for efficient autophagosome biogenesis, the assembly of ATG9-containing tubulovesicular clusters into phagophores/autophagosomes, and for the disassembly of PAS-associated ATG components. ATG8 delipidation by ATG4 also recycles ATG8-PE generated on inappropriate membranes to maintain a reservoir of unlipidated ATG8 that is required for autophagosome formation at the PAS. Autophagy is required for proper vegetative growth, asexual/sexual reproduction, and full virulence. Autophagy is particularly involved in the biosynthesis of deoxynivalenol (DON), an important virulence determinant. The polypeptide is Cysteine protease ATG4 (Gibberella zeae (strain ATCC MYA-4620 / CBS 123657 / FGSC 9075 / NRRL 31084 / PH-1) (Wheat head blight fungus)).